Here is a 127-residue protein sequence, read N- to C-terminus: uncharacterized protein (127 aa).

The N-terminal stretch at 1 to 23 (MAGVRARAPLPLALLLSLPAAPG) is a signal peptide. The segment at 43–127 (CFEVGLRKPP…ACPPRAPLWR (85 aa)) is disordered. The segment covering 59 to 70 (PPSFSSGSSRPL) has biased composition (low complexity).

It is found in the secreted. This is an uncharacterized protein from Homo sapiens (Human).